The chain runs to 426 residues: Protein trichome birefringence-like 19 (426 aa).

Residues 15–35 (LLIAVTIATSLLTIIPLLYPL) traverse the membrane as a helical; Signal-anchor for type II membrane protein segment. The GDS motif signature appears at 142-144 (GDS). Residues 388–402 (DCVHWCLPGPIDNLN) carry the DCXHWCLPGXXDXWN motif motif.

Belongs to the PC-esterase family. TBL subfamily.

It localises to the membrane. Functionally, may act as a bridging protein that binds pectin and other cell wall polysaccharides. Probably involved in maintaining esterification of pectins. May be involved in the specific O-acetylation of cell wall polymers. This is Protein trichome birefringence-like 19 (TBL19) from Arabidopsis thaliana (Mouse-ear cress).